Reading from the N-terminus, the 339-residue chain is Anthranilate phosphoribosyltransferase (339 aa).

Residues Gly81, 84–85 (GD), Ser89, 91–94 (NVST), 109–117 (KHGNRALSS), and Ala121 contribute to the 5-phospho-alpha-D-ribose 1-diphosphate site. Residue Gly81 coordinates anthranilate. Ser93 provides a ligand contact to Mg(2+). Position 112 (Asn112) interacts with anthranilate. Arg167 is a binding site for anthranilate. Mg(2+) is bound by residues Asp226 and Glu227.

Belongs to the anthranilate phosphoribosyltransferase family. As to quaternary structure, homodimer. Mg(2+) serves as cofactor.

It carries out the reaction N-(5-phospho-beta-D-ribosyl)anthranilate + diphosphate = 5-phospho-alpha-D-ribose 1-diphosphate + anthranilate. It functions in the pathway amino-acid biosynthesis; L-tryptophan biosynthesis; L-tryptophan from chorismate: step 2/5. Catalyzes the transfer of the phosphoribosyl group of 5-phosphorylribose-1-pyrophosphate (PRPP) to anthranilate to yield N-(5'-phosphoribosyl)-anthranilate (PRA). This chain is Anthranilate phosphoribosyltransferase, found in Rhodopseudomonas palustris (strain BisA53).